The sequence spans 296 residues: Light-independent protochlorophyllide reductase iron-sulfur ATP-binding protein (296 aa).

Residues 1–11 (MTSTITRKEDG) show a composition bias toward basic and acidic residues. The interval 1–20 (MTSTITRKEDGEGSVQVKQD) is disordered. ATP is bound by residues 39–44 (GIGKST) and K68. S43 is a binding site for Mg(2+). C124 and C158 together coordinate [4Fe-4S] cluster. ATP is bound at residue 209–210 (NR).

It belongs to the NifH/BchL/ChlL family. In terms of assembly, homodimer. Protochlorophyllide reductase is composed of three subunits; ChlL, ChlN and ChlB. [4Fe-4S] cluster is required as a cofactor.

The enzyme catalyses chlorophyllide a + oxidized 2[4Fe-4S]-[ferredoxin] + 2 ADP + 2 phosphate = protochlorophyllide a + reduced 2[4Fe-4S]-[ferredoxin] + 2 ATP + 2 H2O. It participates in porphyrin-containing compound metabolism; chlorophyll biosynthesis (light-independent). Functionally, component of the dark-operative protochlorophyllide reductase (DPOR) that uses Mg-ATP and reduced ferredoxin to reduce ring D of protochlorophyllide (Pchlide) to form chlorophyllide a (Chlide). This reaction is light-independent. The L component serves as a unique electron donor to the NB-component of the complex, and binds Mg-ATP. This Prochlorococcus marinus (strain NATL1A) protein is Light-independent protochlorophyllide reductase iron-sulfur ATP-binding protein.